A 362-amino-acid chain; its full sequence is CLIP domain-containing serine protease B10 (362 aa).

The first 19 residues, 1-19 (MAKVVDCVLLLAFIAVVRG), serve as a signal peptide directing secretion. Residues 22–75 (ACRTPDHRDGVCHPVQQCPSVRDEFFNSDRVLSEDEIDYLRKLQCKTKDVTICC) form the Clip domain. 3 disulfide bridges follow: cysteine 23-cysteine 74, cysteine 33-cysteine 66, and cysteine 39-cysteine 75. Residues 110-361 (IIGGNYTAID…YLDWIRQNIR (252 aa)) enclose the Peptidase S1 domain. N-linked (GlcNAc...) asparagine glycosylation is present at asparagine 114. Residues cysteine 140 and cysteine 156 are joined by a disulfide bond. Active-site charge relay system residues include histidine 155 and aspartate 220. Residue asparagine 254 is glycosylated (N-linked (GlcNAc...) asparagine). Intrachain disulfides connect cysteine 285–cysteine 300 and cysteine 310–cysteine 337. Catalysis depends on serine 314, which acts as the Charge relay system.

This sequence belongs to the peptidase S1 family. CLIP subfamily. In terms of assembly, forms a covalent heterodimer with SRPN2; the interaction inhibits CLIPB10 catalytic activity. Cleaved by an unknown protease into an active form.

The protein localises to the secreted. Inhibited by serpin SRPN2. Serine protease which preferentially cleaves after arginine residues. Involved in the innate immune response against parasite P.bergei infection by activating the melanization cascade. Probably in the hemolymph, cleaves and activates prophenoloxidase (PPO), which functions in the formation of pigments such as melanin and other polyphenolic compounds. In the susceptible strain G3, appears to be dispensable for ookinete elimination which occurs by lysis. This Anopheles gambiae (African malaria mosquito) protein is CLIP domain-containing serine protease B10.